The chain runs to 288 residues: ATP synthase gamma chain (288 aa).

The protein belongs to the ATPase gamma chain family. F-type ATPases have 2 components, CF(1) - the catalytic core - and CF(0) - the membrane proton channel. CF(1) has five subunits: alpha(3), beta(3), gamma(1), delta(1), epsilon(1). CF(0) has three main subunits: a, b and c.

The protein localises to the cell inner membrane. Its function is as follows. Produces ATP from ADP in the presence of a proton gradient across the membrane. The gamma chain is believed to be important in regulating ATPase activity and the flow of protons through the CF(0) complex. The polypeptide is ATP synthase gamma chain (Aliivibrio fischeri (strain ATCC 700601 / ES114) (Vibrio fischeri)).